A 338-amino-acid polypeptide reads, in one-letter code: Holliday junction branch migration complex subunit RuvB (338 aa).

The segment at 1–181 (MEERILTQNF…FGVINRLDYY (181 aa)) is large ATPase domain (RuvB-L). Residues Leu-20, Arg-21, Gly-62, Lys-65, Thr-66, Thr-67, 128-130 (EDF), Arg-171, Tyr-181, and Arg-218 each bind ATP. Position 66 (Thr-66) interacts with Mg(2+). The segment at 182–252 (SVEELKEIIK…TSKEALDVLG (71 aa)) is small ATPAse domain (RuvB-S). The segment at 255–338 (EIGLEYIDRK…YIEQGRIEGV (84 aa)) is head domain (RuvB-H). Arg-310 and Arg-315 together coordinate DNA.

This sequence belongs to the RuvB family. In terms of assembly, homohexamer. Forms an RuvA(8)-RuvB(12)-Holliday junction (HJ) complex. HJ DNA is sandwiched between 2 RuvA tetramers; dsDNA enters through RuvA and exits via RuvB. An RuvB hexamer assembles on each DNA strand where it exits the tetramer. Each RuvB hexamer is contacted by two RuvA subunits (via domain III) on 2 adjacent RuvB subunits; this complex drives branch migration. In the full resolvosome a probable DNA-RuvA(4)-RuvB(12)-RuvC(2) complex forms which resolves the HJ.

The protein resides in the cytoplasm. The enzyme catalyses ATP + H2O = ADP + phosphate + H(+). Functionally, the RuvA-RuvB-RuvC complex processes Holliday junction (HJ) DNA during genetic recombination and DNA repair, while the RuvA-RuvB complex plays an important role in the rescue of blocked DNA replication forks via replication fork reversal (RFR). RuvA specifically binds to HJ cruciform DNA, conferring on it an open structure. The RuvB hexamer acts as an ATP-dependent pump, pulling dsDNA into and through the RuvAB complex. RuvB forms 2 homohexamers on either side of HJ DNA bound by 1 or 2 RuvA tetramers; 4 subunits per hexamer contact DNA at a time. Coordinated motions by a converter formed by DNA-disengaged RuvB subunits stimulates ATP hydrolysis and nucleotide exchange. Immobilization of the converter enables RuvB to convert the ATP-contained energy into a lever motion, pulling 2 nucleotides of DNA out of the RuvA tetramer per ATP hydrolyzed, thus driving DNA branch migration. The RuvB motors rotate together with the DNA substrate, which together with the progressing nucleotide cycle form the mechanistic basis for DNA recombination by continuous HJ branch migration. Branch migration allows RuvC to scan DNA until it finds its consensus sequence, where it cleaves and resolves cruciform DNA. In Thermoanaerobacter pseudethanolicus (strain ATCC 33223 / 39E) (Clostridium thermohydrosulfuricum), this protein is Holliday junction branch migration complex subunit RuvB.